Here is a 1388-residue protein sequence, read N- to C-terminus: Rho-associated protein kinase 2 (1388 aa).

The tract at residues 1-27 is disordered; the sequence is MSRPPPTGKMPGAPETAPGDGAGASRQ. The Protein kinase domain maps to 92–354; it reads YDVVKVIGRG…VEEIRQHPFF (263 aa). ATP is bound by residues 98-106 and lysine 121; that span reads IGRGAFGEV. Catalysis depends on aspartate 214, which acts as the Proton acceptor. One can recognise an AGC-kinase C-terminal domain in the interval 357 to 425; it reads DQWHWDNIRE…YRENLLLSDS (69 aa). Positions 363-784 are interaction with PPP1R12A; sequence NIRETAAPVV…INELLKQKDV (422 aa). An interaction with NPM1 region spans residues 373–420; the sequence is PELSSDIDSSNFDDIEDDKGDVETFPIPKAFVGNQLPFIGFTYYRENL. Threonine 414 bears the Phosphothreonine; by ROCK2 mark. Coiled coils occupy residues 429 to 1024 and 1053 to 1131; these read RETD…EKQL and DTDV…IGLD. Residues 497–573 form the REM-1 domain; that stretch reads ALRQLEREKA…LDETNALLRT (77 aa). Residue tyrosine 722 is modified to Phosphotyrosine; by SRC. The RhoBD domain occupies 979-1047; it reads TSDVANLANE…LAEIMNRKEP (69 aa). The interval 979-1047 is RHOA binding; the sequence is TSDVANLANE…LAEIMNRKEP (69 aa). Serine 1137 is modified (phosphoserine). A PH domain is found at 1150–1349; the sequence is ESRLEGWLSL…WVSRLVKKIP (200 aa). Phosphothreonine is present on threonine 1212. The Phorbol-ester/DAG-type zinc finger occupies 1260–1315; the sequence is GHEFIPTLYHFPTNCEACMKPLWHMFKPPPALECRRCHIKCHKDHMDKKEEIIAPC. The tract at residues 1345 to 1388 is disordered; the sequence is VKKIPKKPPAPDPFARSSPRTSMKIQQNQSIRRPSRQLAPNKPS. Phosphoserine is present on residues serine 1362 and serine 1374. Over residues 1362-1376 the composition is skewed to polar residues; it reads SPRTSMKIQQNQSIR.

This sequence belongs to the protein kinase superfamily. AGC Ser/Thr protein kinase family. In terms of assembly, homodimer. Interacts with IRS1. Interacts with RAF1. Interacts with RHOA (activated by GTP), RHOB and RHOC. Interacts with PPP1R12A. Interacts with EP300. Interacts with CHORDC1. Interacts with BRCA2. Interacts with NPM1; this interaction enhances ROCK2 activity. Interacts with SORL1. Interacts with PJVK. The cofactor is Mg(2+). In terms of processing, phosphorylation at Tyr-722 reduces its binding to RHOA and is crucial for focal adhesion dynamics. Dephosphorylation by PTPN11 stimulates its RHOA binding activity. Post-translationally, cleaved by granzyme B during apoptosis. This leads to constitutive activation of the kinase and membrane blebbing. In terms of tissue distribution, expressed in the brain (at protein level).

It localises to the cytoplasm. It is found in the cell membrane. The protein resides in the nucleus. The protein localises to the cytoskeleton. Its subcellular location is the microtubule organizing center. It localises to the centrosome. It carries out the reaction L-seryl-[protein] + ATP = O-phospho-L-seryl-[protein] + ADP + H(+). The enzyme catalyses L-threonyl-[protein] + ATP = O-phospho-L-threonyl-[protein] + ADP + H(+). Its activity is regulated as follows. Activated by RHOA binding. Inhibited by Y-27632. Protein kinase which is a key regulator of actin cytoskeleton and cell polarity. Involved in regulation of smooth muscle contraction, actin cytoskeleton organization, stress fiber and focal adhesion formation, neurite retraction, cell adhesion and motility via phosphorylation of ADD1, BRCA2, CNN1, EZR, DPYSL2, EP300, MSN, MYL9/MLC2, NPM1, RDX, PPP1R12A and VIM. Phosphorylates SORL1 and IRF4. Acts as a negative regulator of VEGF-induced angiogenic endothelial cell activation. Positively regulates the activation of p42/MAPK1-p44/MAPK3 and of p90RSK/RPS6KA1 during myogenic differentiation. Plays an important role in the timely initiation of centrosome duplication. Inhibits keratinocyte terminal differentiation. May regulate closure of the eyelids and ventral body wall through organization of actomyosin bundles. Plays a critical role in the regulation of spine and synaptic properties in the hippocampus. Plays an important role in generating the circadian rhythm of the aortic myofilament Ca(2+) sensitivity and vascular contractility by modulating the myosin light chain phosphorylation. The sequence is that of Rho-associated protein kinase 2 (ROCK2) from Homo sapiens (Human).